Here is a 72-residue protein sequence, read N- to C-terminus: Penaeidin-2d (72 aa).

An N-terminal signal peptide occupies residues 1-21; the sequence is MRLVVCLVFLASFALVCQGGA. The residue at position 22 (glutamine 22) is a Pyrrolidone carboxylic acid. 3 disulfides stabilise this stretch: cysteine 45/cysteine 59, cysteine 48/cysteine 66, and cysteine 60/cysteine 67. Position 71 is a lysine amide (lysine 71).

Belongs to the penaeidin family.

It is found in the cytoplasmic granule. Its function is as follows. Antibacterial and antifungal activity. Presents chitin-binding activity. The protein is Penaeidin-2d of Penaeus setiferus (Atlantic white shrimp).